The primary structure comprises 372 residues: GTPase Obg (372 aa).

An Obg domain is found at 1-159; sequence MAFVDEAKFF…KWLLIELKLM (159 aa). Positions 121–141 are disordered; the sequence is GSGGMGNPHFSSGSNRTPRVA. Residues 160 to 329 enclose the OBG-type G domain; it reads ADVGLVGLPN…LVKLIGDIID (170 aa). Residues 166-173, 191-195, 213-216, 280-283, and 310-312 each bind GTP; these read GLPNAGKS, FTTLE, DIPG, NKCD, and SAI. Mg(2+) is bound by residues S173 and T193. A disordered region spans residues 346 to 372; sequence QDLKKQKEEERRQELKKQKEEEQAKDE.

Belongs to the TRAFAC class OBG-HflX-like GTPase superfamily. OBG GTPase family. As to quaternary structure, monomer. The cofactor is Mg(2+).

It is found in the cytoplasm. An essential GTPase which binds GTP, GDP and possibly (p)ppGpp with moderate affinity, with high nucleotide exchange rates and a fairly low GTP hydrolysis rate. Plays a role in control of the cell cycle, stress response, ribosome biogenesis and in those bacteria that undergo differentiation, in morphogenesis control. This Desulfotalea psychrophila (strain LSv54 / DSM 12343) protein is GTPase Obg.